The sequence spans 807 residues: Glycerol-3-phosphate acyltransferase (807 aa).

Positions 305-310 (CHRSHM) match the HXXXXD motif motif.

The protein belongs to the GPAT/DAPAT family.

The protein resides in the cell inner membrane. It carries out the reaction sn-glycerol 3-phosphate + an acyl-CoA = a 1-acyl-sn-glycero-3-phosphate + CoA. The protein operates within phospholipid metabolism; CDP-diacylglycerol biosynthesis; CDP-diacylglycerol from sn-glycerol 3-phosphate: step 1/3. The protein is Glycerol-3-phosphate acyltransferase of Shigella boydii serotype 18 (strain CDC 3083-94 / BS512).